Here is a 144-residue protein sequence, read N- to C-terminus: Glutamyl-tRNA(Gln) amidotransferase subunit C, mitochondrial (144 aa).

The transit peptide at methionine 1–phenylalanine 17 directs the protein to the mitochondrion.

Belongs to the GatC family. Subunit of the heterotrimeric GatCAB amidotransferase (AdT) complex, composed of A, B and C subunits.

It is found in the mitochondrion. It catalyses the reaction L-glutamyl-tRNA(Gln) + L-glutamine + ATP + H2O = L-glutaminyl-tRNA(Gln) + L-glutamate + ADP + phosphate + H(+). In terms of biological role, allows the formation of correctly charged Gln-tRNA(Gln) through the transamidation of misacylated Glu-tRNA(Gln) in the mitochondria. The reaction takes place in the presence of glutamine and ATP through an activated gamma-phospho-Glu-tRNA(Gln). The polypeptide is Glutamyl-tRNA(Gln) amidotransferase subunit C, mitochondrial (Ixodes scapularis (Black-legged tick)).